A 197-amino-acid polypeptide reads, in one-letter code: Xanthine phosphoribosyltransferase (197 aa).

Leucine 20 and asparagine 27 together coordinate xanthine. 128-132 is a 5-phospho-alpha-D-ribose 1-diphosphate binding site; sequence ANGQA. Xanthine is bound at residue lysine 156.

This sequence belongs to the purine/pyrimidine phosphoribosyltransferase family. Xpt subfamily. In terms of assembly, homodimer.

It is found in the cytoplasm. It carries out the reaction XMP + diphosphate = xanthine + 5-phospho-alpha-D-ribose 1-diphosphate. It functions in the pathway purine metabolism; XMP biosynthesis via salvage pathway; XMP from xanthine: step 1/1. Converts the preformed base xanthine, a product of nucleic acid breakdown, to xanthosine 5'-monophosphate (XMP), so it can be reused for RNA or DNA synthesis. This is Xanthine phosphoribosyltransferase from Bacillus anthracis (strain A0248).